The following is a 569-amino-acid chain: Lysine--tRNA ligase (569 aa).

Residues glutamate 414 and glutamate 421 each contribute to the Mg(2+) site.

The protein belongs to the class-II aminoacyl-tRNA synthetase family. Homodimer. Mg(2+) serves as cofactor.

The protein resides in the cytoplasm. It catalyses the reaction tRNA(Lys) + L-lysine + ATP = L-lysyl-tRNA(Lys) + AMP + diphosphate. This is Lysine--tRNA ligase from Christiangramia forsetii (strain DSM 17595 / CGMCC 1.15422 / KT0803) (Gramella forsetii).